The chain runs to 763 residues: Cyclin-F (763 aa).

Residues 19 to 27 (KRRVKRRPR) carry the Nuclear localization signal 1 motif. The F-box domain occupies 28–75 (VLTLLSLPEDVLLYVLECLPAVDILSMREVHPHLRSLVDSHSSVWARA). A Cyclin N-terminal domain is found at 299-411 (INKTSIFTTQ…EIISALEGKI (113 aa)). 2 short sequence motifs (d box) span residues 316–319 (RYIL) and 355–358 (RAKL). 2 disordered regions span residues 574 to 600 (GSKT…TAEL) and 677 to 763 (KLEN…SDEL). A Nuclear localization signal 2 motif is present at residues 575–581 (SKTKRRR). Residues 580–590 (RREDSIQEDRG) show a composition bias toward basic and acidic residues. Positions 589 to 747 (RGSFVTTPTA…LFKASRRQVK (159 aa)) are PEST. The span at 692–710 (SSGYSSVSSGGSPTSSSSP) shows a compositional bias: low complexity. Basic residues predominate over residues 741-751 (ASRRQVKRKNQ).

The protein belongs to the cyclin family. Cyclin AB subfamily. As to quaternary structure, component of the SCF(CCNF) complex.

It localises to the nucleus. The protein localises to the cytoplasm. Its subcellular location is the perinuclear region. The protein resides in the cytoskeleton. It is found in the microtubule organizing center. It localises to the centrosome. The protein localises to the centriole. Functionally, substrate recognition component of the SCF(CCNF) E3 ubiquitin-protein ligase complex which mediates the ubiquitination and subsequent proteasomal degradation of target proteins. The SCF(CCNF) E3 ubiquitin-protein ligase complex is an integral component of the ubiquitin proteasome system (UPS) and links proteasome degradation to the cell cycle. Mediates the substrate recognition and the proteasomal degradation of various target proteins during G2 phase involved in the regulation of cell cycle progression and in the maintenance of genome stability. The polypeptide is Cyclin-F (ccnf) (Xenopus tropicalis (Western clawed frog)).